We begin with the raw amino-acid sequence, 459 residues long: Cyclic GMP-AMP synthase-like receptor 2 (459 aa).

ATP-binding positions include serine 68 and 79 to 81 (EFD). Mg(2+)-binding residues include glutamate 79, aspartate 81, and aspartate 199. GTP-binding positions include aspartate 199 and 248 to 255 (RSSFYAVE). ATP is bound at residue 252–255 (YAVE). Histidine 263 serves as a coordination point for Zn(2+). ATP-binding positions include lysine 274 and 288–292 (SYYIK).

This sequence belongs to the mab-21 family. It depends on Mg(2+) as a cofactor. Requires Mn(2+) as cofactor.

The catalysed reaction is GTP + ATP = 3',2'-cGAMP + 2 diphosphate. The enzyme catalyses GTP + ATP = 2',3'-cGAMP + 2 diphosphate. It carries out the reaction GTP + ATP = pppGp(2'-5')A + diphosphate. It catalyses the reaction pppA(2'-5')pG = 3',2'-cGAMP + diphosphate. The catalysed reaction is pppGp(2'-5')A = 2',3'-cGAMP + diphosphate. The enzyme activity is specifically activated by some nucleic acid. Its function is as follows. Nucleotidyltransferase that catalyzes the formation of cyclic GMP-AMP from ATP and GTP and plays a key role in antiviral innate immunity. Directly binds some unknown nucleic acid, activating the nucleotidyltransferase activity, leading to synthesis of both 3',2'-cGAMP and 2',3'-cGAMP second messengers. 3',2'-cGAMP and 2',3'-cGAMP bind to and activate Sting, thereby triggering the antiviral immune response via activation of the NF-kappa-B transcription factor Rel (Relish). This is Cyclic GMP-AMP synthase-like receptor 2 from Drosophila melanogaster (Fruit fly).